The chain runs to 275 residues: Large ribosomal subunit protein uL2 (275 aa).

Disordered stretches follow at residues 36-55 and 224-263; these read GLTGSGGRNNTGRITARRMG and VVMNPIDHPHGGGEGRTSGGRHPVTPWGKPTKGKKTRQNK.

Belongs to the universal ribosomal protein uL2 family. In terms of assembly, part of the 50S ribosomal subunit. Forms a bridge to the 30S subunit in the 70S ribosome.

Its function is as follows. One of the primary rRNA binding proteins. Required for association of the 30S and 50S subunits to form the 70S ribosome, for tRNA binding and peptide bond formation. It has been suggested to have peptidyltransferase activity; this is somewhat controversial. Makes several contacts with the 16S rRNA in the 70S ribosome. In Rhodospirillum centenum (strain ATCC 51521 / SW), this protein is Large ribosomal subunit protein uL2.